A 260-amino-acid chain; its full sequence is Pro-thyrotropin-releasing hormone (260 aa).

An N-terminal signal peptide occupies residues 1 to 24 (MPSIQLPVLLLCLTLSGVCLNGRQ). Residues 72-112 (PQWLSKRQHPGKRYISDPEKRQHPGKRDVEEKASFGDIQKR) form a disordered region. At Gln-79 the chain carries Pyrrolidone carboxylic acid. Pro-81 bears the Proline amide mark. Residues 85–112 (YISDPEKRQHPGKRDVEEKASFGDIQKR) show a composition bias toward basic and acidic residues. Residue Gln-93 is modified to Pyrrolidone carboxylic acid. Pro-95 is modified (proline amide). Position 113 is a pyrrolidone carboxylic acid (Gln-113). Leucine amide is present on Leu-115. Gln-134 bears the Pyrrolidone carboxylic acid mark. At Pro-136 the chain carries Proline amide. Gln-163 carries the pyrrolidone carboxylic acid modification. Pro-165 bears the Proline amide mark. Residues 195 to 207 (KHQQFGNRDRDSD) are compositionally biased toward basic and acidic residues. Disordered stretches follow at residues 195-217 (KHQQ…PCDL) and 238-260 (KEGV…ETEE). Position 246 is a pyrrolidone carboxylic acid (Gln-246). A Proline amide modification is found at Pro-248.

This sequence belongs to the TRH family.

It is found in the secreted. Its function is as follows. Functions as a regulator of the biosynthesis of TSH in the anterior pituitary gland and as a neurotransmitter/ neuromodulator in the central and peripheral nervous systems. The chain is Pro-thyrotropin-releasing hormone (TRH) from Gallus gallus (Chicken).